Consider the following 62-residue polypeptide: Photosystem II reaction center protein Z (62 aa).

A run of 2 helical transmembrane segments spans residues 8–28 and 41–61; these read ALAALVFFSFVMVIGVPFAYA and WVGSGIWTILVIVVAVLNFFV.

The protein belongs to the PsbZ family. PSII is composed of 1 copy each of membrane proteins PsbA, PsbB, PsbC, PsbD, PsbE, PsbF, PsbH, PsbI, PsbJ, PsbK, PsbL, PsbM, PsbT, PsbX, PsbY, PsbZ, Psb30/Ycf12, peripheral proteins PsbO, CyanoQ (PsbQ), PsbU, PsbV and a large number of cofactors. It forms dimeric complexes.

The protein localises to the cellular thylakoid membrane. Its function is as follows. May control the interaction of photosystem II (PSII) cores with the light-harvesting antenna, regulates electron flow through the 2 photosystem reaction centers. PSII is a light-driven water plastoquinone oxidoreductase, using light energy to abstract electrons from H(2)O, generating a proton gradient subsequently used for ATP formation. This chain is Photosystem II reaction center protein Z, found in Gloeothece citriformis (strain PCC 7424) (Cyanothece sp. (strain PCC 7424)).